The primary structure comprises 427 residues: SAC3 domain-containing protein 1 (427 aa).

Basic and acidic residues-rich tracts occupy residues 1–10 and 117–127; these read MGRFKGENRS and ADPKRTVKEYS. 2 disordered regions span residues 1 to 53 and 101 to 143; these read MGRF…QDAV and LHRL…LLRP. The span at 134–143 shows a compositional bias: pro residues; that stretch reads PRPPPSLLRP. In terms of domain architecture, PCI spans 229-397; the sequence is QVQEGFGSLR…EGLPPPGAYH (169 aa). Serine 425 is modified (phosphoserine).

The protein belongs to the SAC3 family. As to quaternary structure, may be part of a SEM1-containing complex. In terms of tissue distribution, present in spleen cells (at protein level).

The protein resides in the cytoplasm. It is found in the cytoskeleton. It localises to the microtubule organizing center. Its subcellular location is the centrosome. The protein localises to the spindle. Involved in centrosome duplication and mitotic progression. The polypeptide is SAC3 domain-containing protein 1 (Sac3d1) (Mus musculus (Mouse)).